A 284-amino-acid polypeptide reads, in one-letter code: Bifunctional protein FolD (284 aa).

NADP(+) is bound by residues 164-166, Ser189, and Ile230; that span reads GRG.

Belongs to the tetrahydrofolate dehydrogenase/cyclohydrolase family. As to quaternary structure, homodimer.

The catalysed reaction is (6R)-5,10-methylene-5,6,7,8-tetrahydrofolate + NADP(+) = (6R)-5,10-methenyltetrahydrofolate + NADPH. The enzyme catalyses (6R)-5,10-methenyltetrahydrofolate + H2O = (6R)-10-formyltetrahydrofolate + H(+). Its pathway is one-carbon metabolism; tetrahydrofolate interconversion. Catalyzes the oxidation of 5,10-methylenetetrahydrofolate to 5,10-methenyltetrahydrofolate and then the hydrolysis of 5,10-methenyltetrahydrofolate to 10-formyltetrahydrofolate. The polypeptide is Bifunctional protein FolD (Desulforamulus reducens (strain ATCC BAA-1160 / DSM 100696 / MI-1) (Desulfotomaculum reducens)).